The following is a 301-amino-acid chain: tRNA U34 carboxymethyltransferase (301 aa).

Carboxy-S-adenosyl-L-methionine-binding positions include Lys70, Trp84, Lys89, Gly108, 130-132 (DPS), 157-158 (VE), Tyr177, and Arg292.

It belongs to the class I-like SAM-binding methyltransferase superfamily. CmoB family. Homotetramer.

The catalysed reaction is carboxy-S-adenosyl-L-methionine + 5-hydroxyuridine(34) in tRNA = 5-carboxymethoxyuridine(34) in tRNA + S-adenosyl-L-homocysteine + H(+). Catalyzes carboxymethyl transfer from carboxy-S-adenosyl-L-methionine (Cx-SAM) to 5-hydroxyuridine (ho5U) to form 5-carboxymethoxyuridine (cmo5U) at position 34 in tRNAs. This is tRNA U34 carboxymethyltransferase from Sulfurovum sp. (strain NBC37-1).